The primary structure comprises 529 residues: Ell-associated factor Eaf (529 aa).

2 disordered regions span residues 155 to 235 (AAGS…PMIT) and 253 to 529 (ANIS…DDDD). Polar residues predominate over residues 167–186 (ENSTMRISSKTKVSTGSRRN). Low complexity-rich tracts occupy residues 194–215 (RNSP…SPQS), 256–265 (SGSSTGSSSG), 306–315 (HQNQQQQQQN), and 327–346 (QQQH…QQQQ). Residue Ser196 is modified to Phosphoserine. A compositionally biased stretch (polar residues) spans 347-359 (RASFSHSNHSNSM). Acidic residues predominate over residues 401–416 (DSSDTDSGSDSDDSTD). 4 stretches are compositionally biased toward low complexity: residues 431-451 (HQQQ…HMHQ), 469-480 (QHQQQQQQPPQQ), 488-499 (QQQQQQQQQQQS), and 510-523 (NDLL…SSNS).

Belongs to the EAF family.

Its subcellular location is the nucleus. Functionally, promotes transcriptional elongation by Su(Tpl)/ELL. Essential for development. The polypeptide is Ell-associated factor Eaf (Drosophila grimshawi (Hawaiian fruit fly)).